We begin with the raw amino-acid sequence, 267 residues long: LysM and putative peptidoglycan-binding domain-containing protein 4 (267 aa).

Over 1 to 211 (MRRGDPPPRA…RSNGADWGIQ (211 aa)) the chain is Extracellular. Residues 30–64 (HRQEEPEASSEDEELNVMELRPRSRDSSSKEKEGV) form a disordered region. A compositionally biased stretch (acidic residues) spans 35–45 (PEASSEDEELN). The span at 49-64 (LRPRSRDSSSKEKEGV) shows a compositional bias: basic and acidic residues. Positions 70–114 (LERDISHEDNLSKLALQYGCKVADIKRVNNLFQEQDMYALKSIKI) constitute a LysM domain. N-linked (GlcNAc...) asparagine glycosylation is present at Asn79. Residues 130–152 (RTPQQRPSHDAAPSNSAMASVSG) are disordered. Residues 142–152 (PSNSAMASVSG) are compositionally biased toward polar residues. The chain crosses the membrane as a helical span at residues 212-232 (WWNAVIAMLLIGIVLPIFYVV). At 233 to 267 (YYKTKDSGESAVDNVGVNISVSTSNSTREYNGKSP) the chain is on the cytoplasmic side.

The protein localises to the membrane. The polypeptide is LysM and putative peptidoglycan-binding domain-containing protein 4 (lysmd4) (Danio rerio (Zebrafish)).